A 301-amino-acid polypeptide reads, in one-letter code: Nucleotide-binding protein Mb1456 (301 aa).

An ATP-binding site is contributed by Gly24–Gly31. Asp75–Ser78 lines the GTP pocket.

The protein belongs to the RapZ-like family.

In terms of biological role, displays ATPase and GTPase activities. The sequence is that of Nucleotide-binding protein Mb1456 from Mycobacterium bovis (strain ATCC BAA-935 / AF2122/97).